We begin with the raw amino-acid sequence, 171 residues long: T-cell surface glycoprotein CD3 delta chain (171 aa).

The N-terminal stretch at 1–21 (MEHSTFLSGLVLATLLSQVSP) is a signal peptide. Residues 22–105 (FKIPVEELED…CVELDPATLA (84 aa)) are Extracellular-facing. The cysteines at positions 37 and 73 are disulfide-linked. Residues N38, N54, and N74 are each glycosylated (N-linked (GlcNAc...) asparagine). Residues 106-126 (GIIVTDVIATLLLALGVFCFA) traverse the membrane as a helical segment. Residues 127-171 (GHETGRLSGAADTQALLRNDQVYQPLRDRDDAQYSRLGGNWARNK) are Cytoplasmic-facing. The ITAM domain occupies 138–166 (DTQALLRNDQVYQPLRDRDDAQYSRLGGN). 2 positions are modified to phosphotyrosine: Y149 and Y160.

As to quaternary structure, the TCR-CD3 complex is composed of a CD3D/CD3E and a CD3G/CD3E heterodimers that preferentially associate with TCRalpha and TCRbeta, respectively, to form TCRalpha/CD3E/CD3G and TCRbeta/CD3G/CD3E trimers. In turn, the hexamer interacts with CD3Z homodimer to form the TCR-CD3 complex. Alternatively, TCRalpha and TCRbeta can be replaced by TCRgamma and TCRdelta. Interacts with coreceptors CD4 and CD8. Post-translationally, phosphorylated on Tyr residues after T-cell receptor triggering by LCK in association with CD4/CD8. As to expression, CD3D is mostly present on T-lymphocytes with its TCR-CD3 partners. Present also in fetal NK-cells.

The protein localises to the cell membrane. Part of the TCR-CD3 complex present on T-lymphocyte cell surface that plays an essential role in adaptive immune response. When antigen presenting cells (APCs) activate T-cell receptor (TCR), TCR-mediated signals are transmitted across the cell membrane by the CD3 chains CD3D, CD3E, CD3G and CD3Z. All CD3 chains contain immunoreceptor tyrosine-based activation motifs (ITAMs) in their cytoplasmic domain. Upon TCR engagement, these motifs become phosphorylated by Src family protein tyrosine kinases LCK and FYN, resulting in the activation of downstream signaling pathways. In addition of this role of signal transduction in T-cell activation, CD3D plays an essential role in thymocyte differentiation. Indeed, participates in correct intracellular TCR-CD3 complex assembly and surface expression. In absence of a functional TCR-CD3 complex, thymocytes are unable to differentiate properly. Interacts with CD4 and CD8 and thus serves to establish a functional link between the TCR and coreceptors CD4 and CD8, which is needed for activation and positive selection of CD4 or CD8 T-cells. The chain is T-cell surface glycoprotein CD3 delta chain (CD3D) from Macaca fascicularis (Crab-eating macaque).